A 361-amino-acid polypeptide reads, in one-letter code: Peptide chain release factor 1 (361 aa).

An N5-methylglutamine modification is found at Q237.

Belongs to the prokaryotic/mitochondrial release factor family. Post-translationally, methylated by PrmC. Methylation increases the termination efficiency of RF1.

Its subcellular location is the cytoplasm. Its function is as follows. Peptide chain release factor 1 directs the termination of translation in response to the peptide chain termination codons UAG and UAA. The chain is Peptide chain release factor 1 from Alcanivorax borkumensis (strain ATCC 700651 / DSM 11573 / NCIMB 13689 / SK2).